We begin with the raw amino-acid sequence, 620 residues long: Ran-binding protein 10 (620 aa).

Positions 1 to 34 (MAAATADPGAGSPQVGDSSGGATGCGLPSPGEQE) are disordered. Ala-2 carries the post-translational modification N-acetylalanine. Positions 35–222 (LSRRLQRLYP…VDANFGQQPF (188 aa)) constitute a B30.2/SPRY domain. The LisH domain maps to 253-285 (WQAVLQNMVSSYLVHHGYCATATAFARMTETPI). One can recognise a CTLH domain in the interval 291 to 348 (SIKNRQKIQKLVLEGRVGEAIETTQRFYPGLLEHNPNLLFMLKCRQFVEMVNGTDSEV). The segment covering 347–398 (EVRSLSSRSPKSQDSYPGSPSLSPRHGPTSSHTHNTGADSPSCSNGVASTKS) has biased composition (polar residues). Residues 347–459 (EVRSLSSRSP…TSDSEMEMEA (113 aa)) form a disordered region. A Phosphoserine modification is found at Ser-361. Tyr-362 carries the phosphotyrosine modification. Ser-365, Ser-367, Ser-369, and Ser-422 each carry phosphoserine. Positions 409 to 436 (SSSSSSSSSSSSSSPSSVNYSESNSTDS) are enriched in low complexity. Positions 437-450 (TKSQPHSSTSNQET) are enriched in polar residues. Phosphoserine occurs at positions 451 and 453.

It belongs to the RANBP9/10 family. May form homodimers. Identified in the CTLH complex that contains GID4, RANBP9 and/or RANBP10, MKLN1, MAEA, RMND5A (or alternatively its paralog RMND5B), GID8, ARMC8, WDR26 and YPEL5. Within this complex, MAEA, RMND5A (or alternatively its paralog RMND5B), GID8, WDR26, and RANBP9 and/or RANBP10 form the catalytic core, while GID4, MKLN1, ARMC8 and YPEL5 have ancillary roles. Interacts with RAN and RANBP9. Interacts with the HGF receptor MET. Interacts with AR. Interacts with TUBB1. Interacts with YPEL5. May interact with TUBB5. Interacts with DDX4.

It is found in the cytoplasm. The protein localises to the cytosol. The protein resides in the nucleus. Functionally, may act as an adapter protein to couple membrane receptors to intracellular signaling pathways. Core component of the CTLH E3 ubiquitin-protein ligase complex that selectively accepts ubiquitin from UBE2H and mediates ubiquitination and subsequent proteasomal degradation of the transcription factor HBP1. Enhances dihydrotestosterone-induced transactivation activity of AR, as well as dexamethasone-induced transactivation activity of NR3C1, but does not affect estrogen-induced transactivation. Acts as a guanine nucleotide exchange factor (GEF) for RAN GTPase. May play an essential role in hemostasis and in maintaining microtubule dynamics with respect to both platelet shape and function. The chain is Ran-binding protein 10 (RANBP10) from Bos taurus (Bovine).